A 258-amino-acid chain; its full sequence is Cell division protein ZapD (258 aa).

Belongs to the ZapD family. Interacts with FtsZ.

It is found in the cytoplasm. Cell division factor that enhances FtsZ-ring assembly. Directly interacts with FtsZ and promotes bundling of FtsZ protofilaments, with a reduction in FtsZ GTPase activity. The polypeptide is Cell division protein ZapD (Coxiella burnetii (strain RSA 331 / Henzerling II)).